We begin with the raw amino-acid sequence, 330 residues long: 7,8-didemethyl-8-hydroxy-5-deazariboflavin synthase (330 aa).

The Radical SAM core domain occupies 5-245 (VTFSRNVFIP…SDVAVQVAPN (241 aa)). Residues Cys19, Cys23, and Cys26 each contribute to the [4Fe-4S] cluster site.

This sequence belongs to the radical SAM superfamily. CofG family. As to quaternary structure, consists of two subunits, CofG and CofH. [4Fe-4S] cluster serves as cofactor.

The enzyme catalyses 5-amino-5-(4-hydroxybenzyl)-6-(D-ribitylimino)-5,6-dihydrouracil + S-adenosyl-L-methionine = 7,8-didemethyl-8-hydroxy-5-deazariboflavin + 5'-deoxyadenosine + L-methionine + NH4(+) + H(+). Its pathway is cofactor biosynthesis; coenzyme F0 biosynthesis. Its function is as follows. Catalyzes the radical-mediated synthesis of 7,8-didemethyl-8-hydroxy-5-deazariboflavin from 5-amino-5-(4-hydroxybenzyl)-6-(D-ribitylimino)-5,6-dihydrouracil. The chain is 7,8-didemethyl-8-hydroxy-5-deazariboflavin synthase from Methanococcoides burtonii (strain DSM 6242 / NBRC 107633 / OCM 468 / ACE-M).